The chain runs to 156 residues: Persephin (156 aa).

The signal sequence occupies residues 1–21 (MAAGRLRILCLLLLSLHPSLG). Intrachain disulfides connect Cys66/Cys124, Cys93/Cys152, and Cys97/Cys154.

Belongs to the TGF-beta family. GDNF subfamily. In terms of assembly, homodimer; disulfide-linked. Interacts with GFRA4 coreceptor and RET: forms a 2:2:2 ternary complex composed of PSPN ligand, GFRA4 and RET receptor.

The protein localises to the secreted. In terms of biological role, growth factor that exhibits neurotrophic activity on mesencephalic dopaminergic and motor neurons. Acts by binding to its coreceptor, GFRA4, leading to autophosphorylation and activation of the RET receptor. This is Persephin from Mus musculus (Mouse).